The chain runs to 139 residues: Gastrula zinc finger protein XlCGF67.1 (139 aa).

5 C2H2-type zinc fingers span residues 6–28, 33–55, 61–83, 89–111, and 117–139; these read VSCPECGKCFTSRTYLNVHKKVH, YSCSECGKSFLSRSHLNTHLRTH, YSCSECGKCFTSSAILITHKRIH, FSCQECGKSFSYRSVFMEHQKIH, and FSCSDCGKCFRYRSHLKVHSRIH.

The protein belongs to the krueppel C2H2-type zinc-finger protein family.

The protein resides in the nucleus. In terms of biological role, may be involved in transcriptional regulation. This Xenopus laevis (African clawed frog) protein is Gastrula zinc finger protein XlCGF67.1.